Here is a 144-residue protein sequence, read N- to C-terminus: Protein archease (144 aa).

The Ca(2+) site is built by Asp14, Asp143, and Ile144.

Belongs to the archease family.

Functionally, activates the tRNA-splicing ligase complex by facilitating the enzymatic turnover of catalytic subunit RtcB. Acts by promoting the guanylylation of RtcB, a key intermediate step in tRNA ligation. Can also alter the NTP specificity of RtcB such that ATP, dGTP or ITP is used efficiently. The polypeptide is Protein archease (Aeropyrum pernix (strain ATCC 700893 / DSM 11879 / JCM 9820 / NBRC 100138 / K1)).